The sequence spans 267 residues: Putative glycosyltransferase 63 (267 aa).

It belongs to the glycosyltransferase group 1 family. Glycosyltransferase 4 subfamily.

In Sulfolobus islandicus filamentous virus (isolate Iceland/Hveragerdi) (SIFV), this protein is Putative glycosyltransferase 63 (SIFV0063).